The chain runs to 151 residues: D-aminoacyl-tRNA deacylase (151 aa).

Positions 142–143 (GP) match the Gly-cisPro motif, important for rejection of L-amino acids motif.

Belongs to the DTD family. Homodimer.

It localises to the cytoplasm. The catalysed reaction is glycyl-tRNA(Ala) + H2O = tRNA(Ala) + glycine + H(+). It catalyses the reaction a D-aminoacyl-tRNA + H2O = a tRNA + a D-alpha-amino acid + H(+). In terms of biological role, an aminoacyl-tRNA editing enzyme that deacylates mischarged D-aminoacyl-tRNAs. Also deacylates mischarged glycyl-tRNA(Ala), protecting cells against glycine mischarging by AlaRS. Acts via tRNA-based rather than protein-based catalysis; rejects L-amino acids rather than detecting D-amino acids in the active site. By recycling D-aminoacyl-tRNA to D-amino acids and free tRNA molecules, this enzyme counteracts the toxicity associated with the formation of D-aminoacyl-tRNA entities in vivo and helps enforce protein L-homochirality. The polypeptide is D-aminoacyl-tRNA deacylase (Psychrobacter arcticus (strain DSM 17307 / VKM B-2377 / 273-4)).